The chain runs to 264 residues: Thymidylate synthase (264 aa).

DUMP is bound at residue Arg21. His51 is a (6R)-5,10-methylene-5,6,7,8-tetrahydrofolate binding site. 126-127 (RR) provides a ligand contact to dUMP. Cys146 (nucleophile) is an active-site residue. Residues 166–169 (RSAD), Asn177, and 207–209 (HLY) each bind dUMP. Position 169 (Asp169) interacts with (6R)-5,10-methylene-5,6,7,8-tetrahydrofolate. Ala263 is a (6R)-5,10-methylene-5,6,7,8-tetrahydrofolate binding site.

Belongs to the thymidylate synthase family. Bacterial-type ThyA subfamily. In terms of assembly, homodimer.

It localises to the cytoplasm. The catalysed reaction is dUMP + (6R)-5,10-methylene-5,6,7,8-tetrahydrofolate = 7,8-dihydrofolate + dTMP. It participates in pyrimidine metabolism; dTTP biosynthesis. In terms of biological role, catalyzes the reductive methylation of 2'-deoxyuridine-5'-monophosphate (dUMP) to 2'-deoxythymidine-5'-monophosphate (dTMP) while utilizing 5,10-methylenetetrahydrofolate (mTHF) as the methyl donor and reductant in the reaction, yielding dihydrofolate (DHF) as a by-product. This enzymatic reaction provides an intracellular de novo source of dTMP, an essential precursor for DNA biosynthesis. The sequence is that of Thymidylate synthase from Legionella pneumophila (strain Lens).